A 56-amino-acid polypeptide reads, in one-letter code: Ovomucoid (56 aa).

The 51-residue stretch at 6–56 (VDCSEYPKPDCTLEYRPLCGSDNKTYASKCNFCNAVVESNGTLTLSHFGKC) folds into the Kazal-like domain. Disulfide bonds link C8–C38, C16–C35, and C24–C56. N-linked (GlcNAc...) asparagine glycosylation occurs at N45.

Its subcellular location is the secreted. The sequence is that of Ovomucoid from Callipepla squamata pallida (Blue scaled quail).